Reading from the N-terminus, the 651-residue chain is Chaperone protein HtpG (651 aa).

Residues 1 to 353 are a; substrate-binding; it reads MAPHVEQLEF…AQDMSLNVSR (353 aa). The interval 354-569 is b; that stretch reads EILQQDRQIR…TFGITPALAR (216 aa). The tract at residues 570-651 is c; the sequence is MYRASGQPVP…RLTRMVGEQS (82 aa).

It belongs to the heat shock protein 90 family. As to quaternary structure, homodimer.

Its subcellular location is the cytoplasm. In terms of biological role, molecular chaperone. Has ATPase activity. The chain is Chaperone protein HtpG from Mycolicibacterium gilvum (strain PYR-GCK) (Mycobacterium gilvum (strain PYR-GCK)).